The chain runs to 278 residues: MAIRKYKPTTPGRRASSVSEFSEITRSTPEKSLLRPLSKTGGRNVHGHITTRHKGGGHKRRYRVIDFRRNDKDGVVAKVAHIEYDPNRTANIALLHYRDGEKRYIIAPRGLKQGALVESGPNADIKVGNNLPLRNIPAGTTIHCVELKPGGGAKMARSAGASIQLLGKEGKYAVLRMPSSEIRRVDIRCRATVGEVGNQEQINIRWGKAGRMRWKGWRPTVRGAAMNPVDHPHGGGEGRTSGGRHPVSPWGQLEGRTRRPNRPSDKMIVRRRRPNKKR.

Disordered stretches follow at residues 1–59 (MAIR…GGHK) and 222–278 (RGAA…NKKR). A compositionally biased stretch (polar residues) spans 16–27 (SSVSEFSEITRS). Composition is skewed to basic residues over residues 45-59 (VHGHITTRHKGGGHK) and 269-278 (VRRRRPNKKR).

It belongs to the universal ribosomal protein uL2 family. Part of the 50S ribosomal subunit. Forms a bridge to the 30S subunit in the 70S ribosome.

In terms of biological role, one of the primary rRNA binding proteins. Required for association of the 30S and 50S subunits to form the 70S ribosome, for tRNA binding and peptide bond formation. It has been suggested to have peptidyltransferase activity; this is somewhat controversial. Makes several contacts with the 16S rRNA in the 70S ribosome. In Corynebacterium urealyticum (strain ATCC 43042 / DSM 7109), this protein is Large ribosomal subunit protein uL2.